We begin with the raw amino-acid sequence, 882 residues long: Translation initiation factor IF-2 (882 aa).

The interval 50–299 (SFKSANTTKP…KERPLPETLV (250 aa)) is disordered. 2 stretches are compositionally biased toward basic and acidic residues: residues 60-71 (STEKDSKNSSRK) and 84-96 (RRRDNKNDHDNRH). Over residues 97–108 (GNNKRRNNKFKK) the composition is skewed to basic residues. 4 stretches are compositionally biased toward basic and acidic residues: residues 109–133 (QQNDRRAERNKPQTEAKSAARDLLN), 169–183 (KKVENTRKPKEEKLE), 232–242 (QKEETKPTRKK), and 250–263 (EVPDYERERSEHSD). Residues 264 to 277 (KARRRRNKKNKRIN) show a composition bias toward basic residues. The segment covering 278-294 (QSKEIKKQPTQRKERPL) has biased composition (basic and acidic residues). A tr-type G domain is found at 383-552 (KRPPVVTIMG…LLQADVMELK (170 aa)). The segment at 392 to 399 (GHVDHGKT) is G1. Residue 392-399 (GHVDHGKT) coordinates GTP. Residues 417–421 (GITQK) are G2. A G3 region spans residues 438–441 (DTPG). GTP contacts are provided by residues 438–442 (DTPGH) and 492–495 (NKID). The G4 stretch occupies residues 492 to 495 (NKID). Positions 528-530 (SAK) are G5.

The protein belongs to the TRAFAC class translation factor GTPase superfamily. Classic translation factor GTPase family. IF-2 subfamily.

The protein resides in the cytoplasm. One of the essential components for the initiation of protein synthesis. Protects formylmethionyl-tRNA from spontaneous hydrolysis and promotes its binding to the 30S ribosomal subunits. Also involved in the hydrolysis of GTP during the formation of the 70S ribosomal complex. This is Translation initiation factor IF-2 from Lactobacillus gasseri (strain ATCC 33323 / DSM 20243 / BCRC 14619 / CIP 102991 / JCM 1131 / KCTC 3163 / NCIMB 11718 / NCTC 13722 / AM63).